The sequence spans 123 residues: Large ribosomal subunit protein bL17 (123 aa).

This sequence belongs to the bacterial ribosomal protein bL17 family. Part of the 50S ribosomal subunit. Contacts protein L32.

In Borreliella burgdorferi (strain ATCC 35210 / DSM 4680 / CIP 102532 / B31) (Borrelia burgdorferi), this protein is Large ribosomal subunit protein bL17.